The primary structure comprises 813 residues: Probable receptor-like protein kinase At5g39020 (813 aa).

A signal peptide spans 1–21; sequence MNCNVLFLLSVLVSVTAGVTA. Residues 22 to 437 lie on the Extracellular side of the membrane; it reads AYHPTDVFLF…TPPIKGKPHV (416 aa). N-linked (GlcNAc...) asparagine glycans are attached at residues asparagine 46, asparagine 61, asparagine 165, asparagine 202, asparagine 213, asparagine 263, asparagine 286, asparagine 293, asparagine 384, and asparagine 401. The helical transmembrane segment at 438 to 458 threads the bilayer; the sequence is LVIILIVVGSVIGLATFIVII. Over 459 to 813 the chain is Cytoplasmic; sequence MLLIRQMKRK…QTQTLDSTII (355 aa). In terms of domain architecture, Protein kinase spans 496–771; that stretch reads KSFSHTVGKG…KVVEMIEGSL (276 aa). Residues 502–510 and lysine 524 contribute to the ATP site; that span reads VGKGGFGTV. The active-site Proton acceptor is aspartate 619. The interval 791–813 is disordered; sequence ESSSLSDGQEAEKQTQTLDSTII. A compositionally biased stretch (polar residues) spans 804 to 813; sequence QTQTLDSTII.

Belongs to the protein kinase superfamily. Ser/Thr protein kinase family.

The protein resides in the membrane. The protein is Probable receptor-like protein kinase At5g39020 of Arabidopsis thaliana (Mouse-ear cress).